Here is a 262-residue protein sequence, read N- to C-terminus: MAPALLLIPAALASFILAFGTGVEFVRFTSLRPLLGRISESGSPDARQGWLAALQDQSILVPLVWDLGLLLLFVGQHSLMATETVKEWMSRYFGVLQRSLYVACTALALQLVMRYWEPVPRGPVLWETRTEPWATWVPLLCFVLHVISWLLIFSILLVFDYAELMGLKQVYYHVLGLGEPLALKSPRALRLFSHLRHPVCVELLTVLWVVPTLGTDRLLLALLLTLYLGLAHGLDQHDLRYLRAQLQRKLHLLSRPQDGEAE.

Over 1 to 4 the chain is Nuclear; that stretch reads MAPA. The chain crosses the membrane as a helical span at residues 5-28; that stretch reads LLLIPAALASFILAFGTGVEFVRF. Over 29-58 the chain is Perinuclear space; it reads TSLRPLLGRISESGSPDARQGWLAALQDQS. Residues 59-80 form a helical membrane-spanning segment; that stretch reads ILVPLVWDLGLLLLFVGQHSLM. Residues 81-97 are Nuclear-facing; that stretch reads ATETVKEWMSRYFGVLQ. Residues 98-114 form a helical membrane-spanning segment; the sequence is RSLYVACTALALQLVMR. Residues 115–133 are Perinuclear space-facing; that stretch reads YWEPVPRGPVLWETRTEPW. Residues 134-164 traverse the membrane as a helical segment; that stretch reads ATWVPLLCFVLHVISWLLIFSILLVFDYAEL. At 165–191 the chain is on the nuclear side; sequence MGLKQVYYHVLGLGEPLALKSPRALRL. Residues 192 to 210 form a helical membrane-spanning segment; that stretch reads FSHLRHPVCVELLTVLWVV. Residues 211–216 lie on the Perinuclear space side of the membrane; it reads PTLGTD. Residues 217–234 traverse the membrane as a helical segment; that stretch reads RLLLALLLTLYLGLAHGL. The Nuclear segment spans residues 235–262; that stretch reads DQHDLRYLRAQLQRKLHLLSRPQDGEAE.

Belongs to the nurim family.

It is found in the nucleus inner membrane. The chain is Nurim (NRM) from Bos taurus (Bovine).